The primary structure comprises 965 residues: Fibronectin-binding protein A (965 aa).

The N-terminal stretch at Met-1–Ala-36 is a signal peptide. Residues Tyr-7–Ser-18 carry the YSIRK-G/S signaling motif motif. Residues Ala-37–Glu-206 are disordered. The segment at Ala-37 to Tyr-514 is ligand-binding A region. Residues Glu-39–Asn-55 are compositionally biased toward polar residues. Low complexity predominate over residues Glu-59–Gln-74. Residues Ser-75–Thr-92 are compositionally biased toward polar residues. Residues Thr-112–Ala-122 are compositionally biased toward basic and acidic residues. A compositionally biased stretch (polar residues) spans Val-126–Gln-139. Positions Asp-179 to Thr-193 are enriched in basic and acidic residues. Residues Gly-194 to Tyr-514 form a fibrinogen/elastin/tropoelastin-binding region. The fibronectin-binding stretch occupies residues Gly-515–Thr-837. The B-1 repeat unit spans residues Glu-548–Ile-577. Positions Glu-548–Ser-607 are 2 X approximate tandem repeats. Residues Glu-578–Ser-607 form a B-2 repeat. 4 disordered regions span residues Gly-598–His-625, Leu-743–Ile-774, Ile-794–Val-903, and Val-916–Met-942. One copy of the D-1; truncated repeat lies at Gly-748 to Gly-770. The interval Gly-748 to Pro-839 is 4 X approximate tandem repeats. The D-2; truncated repeat unit spans residues Gly-771 to His-785. One copy of the D-3 repeat lies at Gly-786–Ser-824. Residues Ile-794–Pro-803 are compositionally biased toward basic and acidic residues. One copy of the D-4; truncated repeat lies at Gly-825–Pro-839. Residues Pro-839 to Pro-885 show a composition bias toward pro residues. WR repeat units follow at residues Pro-840–Thr-853, Pro-854–Lys-867, Pro-868–Lys-881, and Pro-882–Lys-895. Residues Pro-840–Lys-895 are 4 X tandem repeats, Pro-rich (WR). Residues Leu-929 to Gly-933 carry the LPXTG sorting signal motif. Thr-932 is subject to Pentaglycyl murein peptidoglycan amidated threonine. Residues Gly-933–Ala-965 constitute a propeptide, removed by sortase.

It is found in the secreted. The protein resides in the cell wall. Its function is as follows. Promotes bacterial attachment to multiple substrates, such as fibronectin (Fn), fibrinogen (Fg), elastin peptides and tropoelastin. This confers to S.aureus the ability to invade endothelial cells. Promotes adherence to and aggregation of activated platelets. This is Fibronectin-binding protein A (fnbA) from Staphylococcus aureus (strain MRSA252).